Consider the following 239-residue polypeptide: 2-C-methyl-D-erythritol 4-phosphate cytidylyltransferase (239 aa).

This sequence belongs to the IspD/TarI cytidylyltransferase family. IspD subfamily.

It carries out the reaction 2-C-methyl-D-erythritol 4-phosphate + CTP + H(+) = 4-CDP-2-C-methyl-D-erythritol + diphosphate. It functions in the pathway isoprenoid biosynthesis; isopentenyl diphosphate biosynthesis via DXP pathway; isopentenyl diphosphate from 1-deoxy-D-xylulose 5-phosphate: step 2/6. Functionally, catalyzes the formation of 4-diphosphocytidyl-2-C-methyl-D-erythritol from CTP and 2-C-methyl-D-erythritol 4-phosphate (MEP). The protein is 2-C-methyl-D-erythritol 4-phosphate cytidylyltransferase of Ruthia magnifica subsp. Calyptogena magnifica.